A 526-amino-acid chain; its full sequence is MSGNKVEVDKRRTFAIISHPDAGKTTITEKVLLFGNALQKAGTVKGKKSGQHAKSDWMEMEKDRGISITTSVMQFPYNGALVNLLDTPGHEDFSEDTYRTLTAVDSCLMVIDSAKGVEQRTIKLMEVTRLRDTPIVTFMNKLDRDIRDPLELMDEVEKVLNIACAPITWPIGCGKEFKGVYHLLRDEVILYQSGQGHTIQDSTIIKGLDNPELDAAIGTYAAEVREELELVLGASNEFDLELFLAGELTPVYFGTALGNFGVDHILDGIVEWAPKPQARETEVREVQPEDEKFSGFVFKIQANMDPKHRDRVAFMRVCSGRYEQGMKMHHVRLGKDVNVSDALTFMAGDRNRAEVAYPGDIIGLHNHGTMRIGDTFTQGEKLRFTGIPNFAPEMFRRIRLKDPLKQKQLLKGLVQLSEEGAVQVFRPIDTNDLIVGAVGILQFEVVVGRLKSEYKVEAIYEAISVSTARWVYCDDERKLEEFRRKCSTNLALDGGDNLTYIAPTMVNLNLSMERYPDIKFAKTREN.

Residues Asp9–Gln277 form the tr-type G domain. Residues Ser18–Thr25, Asp86–His90, and Asn140–Asp143 each bind GTP.

The protein belongs to the TRAFAC class translation factor GTPase superfamily. Classic translation factor GTPase family. PrfC subfamily.

The protein localises to the cytoplasm. Increases the formation of ribosomal termination complexes and stimulates activities of RF-1 and RF-2. It binds guanine nucleotides and has strong preference for UGA stop codons. It may interact directly with the ribosome. The stimulation of RF-1 and RF-2 is significantly reduced by GTP and GDP, but not by GMP. The polypeptide is Peptide chain release factor 3 (Shewanella sediminis (strain HAW-EB3)).